The following is a 360-amino-acid chain: Glutamate 5-kinase (360 aa).

Position 7 (lysine 7) interacts with ATP. Substrate contacts are provided by serine 47, aspartate 134, and asparagine 146. ATP-binding positions include threonine 166–aspartate 167 and threonine 210–lysine 216. The PUA domain maps to valine 275–valine 356.

This sequence belongs to the glutamate 5-kinase family.

It localises to the cytoplasm. The catalysed reaction is L-glutamate + ATP = L-glutamyl 5-phosphate + ADP. The protein operates within amino-acid biosynthesis; L-proline biosynthesis; L-glutamate 5-semialdehyde from L-glutamate: step 1/2. Catalyzes the transfer of a phosphate group to glutamate to form L-glutamate 5-phosphate. This is Glutamate 5-kinase from Prochlorococcus marinus (strain MIT 9301).